We begin with the raw amino-acid sequence, 206 residues long: Inosine triphosphate pyrophosphatase (206 aa).

21–26 (TGNAKK) serves as a coordination point for ITP. Glu-49 is a binding site for Mg(2+). ITP contacts are provided by residues Lys-61, 77-78 (DT), Lys-94, 153-156 (FGWD), Lys-176, and 181-182 (HR).

The protein belongs to the HAM1 NTPase family. Homodimer. The cofactor is Mg(2+). It depends on Mn(2+) as a cofactor.

The protein resides in the cytoplasm. The catalysed reaction is ITP + H2O = IMP + diphosphate + H(+). It carries out the reaction dITP + H2O = dIMP + diphosphate + H(+). The enzyme catalyses XTP + H2O = XMP + diphosphate + H(+). Its function is as follows. Pyrophosphatase that hydrolyzes non-canonical purine nucleotides such as inosine triphosphate (ITP), deoxyinosine triphosphate (dITP) or xanthosine 5'-triphosphate (XTP) to their respective monophosphate derivatives. The enzyme does not distinguish between the deoxy- and ribose forms. Probably excludes non-canonical purines from RNA and DNA precursor pools, thus preventing their incorporation into RNA and DNA and avoiding chromosomal lesions. This chain is Inosine triphosphate pyrophosphatase, found in Vitis vinifera (Grape).